The sequence spans 727 residues: Translation initiation factor IF-2, mitochondrial (727 aa).

The transit peptide at 1–29 (MNRKILKLENLLRFHTICRQLHSLCQRRM) directs the protein to the mitochondrion. The 171-residue stretch at 178-348 (PRSPVVTIMG…IALAEMLELK (171 aa)) folds into the tr-type G domain. Residues 187 to 194 (GHVDHGKT) are G1. 187–194 (GHVDHGKT) serves as a coordination point for GTP. Positions 212 to 216 (GITQH) are G2. GTP contacts are provided by residues 234–237 (DTPG) and 288–291 (NKCD). Residues 234 to 237 (DTPG) form a G3 region. The tract at residues 288-291 (NKCD) is G4. Residues 324–326 (SAL) are G5. Phosphothreonine is present on T688.

Belongs to the TRAFAC class translation factor GTPase superfamily. Classic translation factor GTPase family. IF-2 subfamily. As to quaternary structure, monomer.

The protein localises to the mitochondrion. Functionally, one of the essential components for the initiation of protein synthesis. Protects formylmethionyl-tRNA from spontaneous hydrolysis and promotes its binding to the 30S ribosomal subunits. Also involved in the hydrolysis of GTP during the formation of the 70S ribosomal complex. The chain is Translation initiation factor IF-2, mitochondrial (MTIF2) from Bos taurus (Bovine).